Consider the following 660-residue polypeptide: Acetyl-coenzyme A synthetase (660 aa).

CoA-binding positions include 197–200 (RGGK) and threonine 317. ATP is bound by residues 397–399 (GEP), 421–426 (DTFWQT), aspartate 512, and arginine 528. CoA is bound at residue serine 536. Arginine 539 provides a ligand contact to ATP. Mg(2+) is bound by residues valine 550 and valine 555. Lysine 625 carries the N6-acetyllysine modification.

It belongs to the ATP-dependent AMP-binding enzyme family. It depends on Mg(2+) as a cofactor. Post-translationally, acetylated. Deacetylation by the SIR2-homolog deacetylase activates the enzyme.

The catalysed reaction is acetate + ATP + CoA = acetyl-CoA + AMP + diphosphate. In terms of biological role, catalyzes the conversion of acetate into acetyl-CoA (AcCoA), an essential intermediate at the junction of anabolic and catabolic pathways. AcsA undergoes a two-step reaction. In the first half reaction, AcsA combines acetate with ATP to form acetyl-adenylate (AcAMP) intermediate. In the second half reaction, it can then transfer the acetyl group from AcAMP to the sulfhydryl group of CoA, forming the product AcCoA. This chain is Acetyl-coenzyme A synthetase, found in Cupriavidus pinatubonensis (strain JMP 134 / LMG 1197) (Cupriavidus necator (strain JMP 134)).